The sequence spans 263 residues: Phosphatidylglycerol--prolipoprotein diacylglyceryl transferase (263 aa).

4 helical membrane passes run 15 to 35 (ISIH…VYLA), 52 to 72 (FILL…VIFQ), 83 to 103 (IFAI…GAAV), and 112 to 132 (AIAV…AQSI). Arginine 134 is an a 1,2-diacyl-sn-glycero-3-phospho-(1'-sn-glycerol) binding site. Helical transmembrane passes span 170-190 (VPTF…ILGL), 200-220 (GDVT…IEGM), and 227-247 (FVGL…GAVL).

This sequence belongs to the Lgt family.

It is found in the cell membrane. It carries out the reaction L-cysteinyl-[prolipoprotein] + a 1,2-diacyl-sn-glycero-3-phospho-(1'-sn-glycerol) = an S-1,2-diacyl-sn-glyceryl-L-cysteinyl-[prolipoprotein] + sn-glycerol 1-phosphate + H(+). It participates in protein modification; lipoprotein biosynthesis (diacylglyceryl transfer). Its function is as follows. Catalyzes the transfer of the diacylglyceryl group from phosphatidylglycerol to the sulfhydryl group of the N-terminal cysteine of a prolipoprotein, the first step in the formation of mature lipoproteins. The sequence is that of Phosphatidylglycerol--prolipoprotein diacylglyceryl transferase from Streptococcus thermophilus (strain CNRZ 1066).